The primary structure comprises 318 residues: 4-hydroxy-3-methylbut-2-enyl diphosphate reductase (318 aa).

Cysteine 12 is a [4Fe-4S] cluster binding site. The (2E)-4-hydroxy-3-methylbut-2-enyl diphosphate site is built by histidine 41 and histidine 74. Positions 41 and 74 each coordinate dimethylallyl diphosphate. Positions 41 and 74 each coordinate isopentenyl diphosphate. Position 96 (cysteine 96) interacts with [4Fe-4S] cluster. Histidine 124 serves as a coordination point for (2E)-4-hydroxy-3-methylbut-2-enyl diphosphate. Histidine 124 contributes to the dimethylallyl diphosphate binding site. Residue histidine 124 coordinates isopentenyl diphosphate. Glutamate 126 (proton donor) is an active-site residue. Threonine 167 lines the (2E)-4-hydroxy-3-methylbut-2-enyl diphosphate pocket. Position 197 (cysteine 197) interacts with [4Fe-4S] cluster. (2E)-4-hydroxy-3-methylbut-2-enyl diphosphate contacts are provided by serine 225, serine 226, asparagine 227, and serine 269. Serine 225, serine 226, asparagine 227, and serine 269 together coordinate dimethylallyl diphosphate. Positions 225, 226, 227, and 269 each coordinate isopentenyl diphosphate.

It belongs to the IspH family. It depends on [4Fe-4S] cluster as a cofactor.

It carries out the reaction isopentenyl diphosphate + 2 oxidized [2Fe-2S]-[ferredoxin] + H2O = (2E)-4-hydroxy-3-methylbut-2-enyl diphosphate + 2 reduced [2Fe-2S]-[ferredoxin] + 2 H(+). The catalysed reaction is dimethylallyl diphosphate + 2 oxidized [2Fe-2S]-[ferredoxin] + H2O = (2E)-4-hydroxy-3-methylbut-2-enyl diphosphate + 2 reduced [2Fe-2S]-[ferredoxin] + 2 H(+). It functions in the pathway isoprenoid biosynthesis; dimethylallyl diphosphate biosynthesis; dimethylallyl diphosphate from (2E)-4-hydroxy-3-methylbutenyl diphosphate: step 1/1. The protein operates within isoprenoid biosynthesis; isopentenyl diphosphate biosynthesis via DXP pathway; isopentenyl diphosphate from 1-deoxy-D-xylulose 5-phosphate: step 6/6. Catalyzes the conversion of 1-hydroxy-2-methyl-2-(E)-butenyl 4-diphosphate (HMBPP) into a mixture of isopentenyl diphosphate (IPP) and dimethylallyl diphosphate (DMAPP). Acts in the terminal step of the DOXP/MEP pathway for isoprenoid precursor biosynthesis. The sequence is that of 4-hydroxy-3-methylbut-2-enyl diphosphate reductase from Francisella tularensis subsp. mediasiatica (strain FSC147).